The following is a 344-amino-acid chain: DNA-directed RNA polymerase subunit alpha (344 aa).

An alpha N-terminal domain (alpha-NTD) region spans residues 1–246; that stretch reads MLVEKFLKDF…EFLFPLVDFE (246 aa). Positions 259-344 are alpha C-terminal domain (alpha-CTD); the sequence is ESSNLLDMSI…VLSKNVKISE (86 aa).

It belongs to the RNA polymerase alpha chain family. As to quaternary structure, homodimer. The RNAP catalytic core consists of 2 alpha, 1 beta, 1 beta' and 1 omega subunit. When a sigma factor is associated with the core the holoenzyme is formed, which can initiate transcription.

It carries out the reaction RNA(n) + a ribonucleoside 5'-triphosphate = RNA(n+1) + diphosphate. Its function is as follows. DNA-dependent RNA polymerase catalyzes the transcription of DNA into RNA using the four ribonucleoside triphosphates as substrates. The chain is DNA-directed RNA polymerase subunit alpha from Borreliella burgdorferi (strain ATCC 35210 / DSM 4680 / CIP 102532 / B31) (Borrelia burgdorferi).